We begin with the raw amino-acid sequence, 355 residues long: Homoserine O-succinyltransferase (355 aa).

The Acyl-thioester intermediate role is filled by Cys146. Substrate-binding residues include Lys167 and Ser196. Catalysis depends on His239, which acts as the Proton acceptor. Residue Glu241 is part of the active site. Arg253 serves as a coordination point for substrate.

The protein belongs to the MetA family.

It is found in the cytoplasm. The enzyme catalyses L-homoserine + succinyl-CoA = O-succinyl-L-homoserine + CoA. Its pathway is amino-acid biosynthesis; L-methionine biosynthesis via de novo pathway; O-succinyl-L-homoserine from L-homoserine: step 1/1. Its function is as follows. Transfers a succinyl group from succinyl-CoA to L-homoserine, forming succinyl-L-homoserine. This chain is Homoserine O-succinyltransferase, found in Methylococcus capsulatus (strain ATCC 33009 / NCIMB 11132 / Bath).